We begin with the raw amino-acid sequence, 653 residues long: tRNA uridine 5-carboxymethylaminomethyl modification enzyme MnmG (653 aa).

FAD-binding positions include 18–23 (GAGHAG), valine 130, and threonine 195. An NAD(+)-binding site is contributed by 287–301 (GPRYCPSIEDKVVRF). FAD is bound at residue glutamine 384. The tract at residues 624 to 653 (SQTKSSASVDKRASSDNESSRPTSSASDSL) is disordered. Positions 632–642 (VDKRASSDNES) are enriched in basic and acidic residues. Over residues 643 to 653 (SRPTSSASDSL) the composition is skewed to polar residues.

Belongs to the MnmG family. Homodimer. Heterotetramer of two MnmE and two MnmG subunits. The cofactor is FAD.

It localises to the cytoplasm. Functionally, NAD-binding protein involved in the addition of a carboxymethylaminomethyl (cmnm) group at the wobble position (U34) of certain tRNAs, forming tRNA-cmnm(5)s(2)U34. This Rhodopirellula baltica (strain DSM 10527 / NCIMB 13988 / SH1) protein is tRNA uridine 5-carboxymethylaminomethyl modification enzyme MnmG.